The primary structure comprises 242 residues: UPF0309 protein BH3325 (242 aa).

In terms of domain architecture, SIS spans 34 to 217 (VSEAVMNGGR…HLLVQQGFEP (184 aa)).

The protein belongs to the UPF0309 family.

This Halalkalibacterium halodurans (strain ATCC BAA-125 / DSM 18197 / FERM 7344 / JCM 9153 / C-125) (Bacillus halodurans) protein is UPF0309 protein BH3325.